Consider the following 72-residue polypeptide: Exodeoxyribonuclease 7 small subunit (72 aa).

Belongs to the XseB family. As to quaternary structure, heterooligomer composed of large and small subunits.

Its subcellular location is the cytoplasm. The catalysed reaction is Exonucleolytic cleavage in either 5'- to 3'- or 3'- to 5'-direction to yield nucleoside 5'-phosphates.. Its function is as follows. Bidirectionally degrades single-stranded DNA into large acid-insoluble oligonucleotides, which are then degraded further into small acid-soluble oligonucleotides. In Chlamydia muridarum (strain MoPn / Nigg), this protein is Exodeoxyribonuclease 7 small subunit.